A 631-amino-acid polypeptide reads, in one-letter code: Phosphomethylpyrimidine synthase (631 aa).

Substrate is bound by residues N239, M268, Y297, H333, 353 to 355, 394 to 397, and E433; these read SRG and DGLR. A Zn(2+)-binding site is contributed by H437. Position 460 (Y460) interacts with substrate. Zn(2+) is bound at residue H501. 3 residues coordinate [4Fe-4S] cluster: C581, C584, and C589.

Belongs to the ThiC family. In terms of assembly, homodimer. The cofactor is [4Fe-4S] cluster.

It carries out the reaction 5-amino-1-(5-phospho-beta-D-ribosyl)imidazole + S-adenosyl-L-methionine = 4-amino-2-methyl-5-(phosphooxymethyl)pyrimidine + CO + 5'-deoxyadenosine + formate + L-methionine + 3 H(+). It participates in cofactor biosynthesis; thiamine diphosphate biosynthesis. Functionally, catalyzes the synthesis of the hydroxymethylpyrimidine phosphate (HMP-P) moiety of thiamine from aminoimidazole ribotide (AIR) in a radical S-adenosyl-L-methionine (SAM)-dependent reaction. The chain is Phosphomethylpyrimidine synthase from Salmonella agona (strain SL483).